The sequence spans 212 residues: Peptide methionine sulfoxide reductase MsrA (212 aa).

Residue Cys51 is part of the active site.

This sequence belongs to the MsrA Met sulfoxide reductase family.

The enzyme catalyses L-methionyl-[protein] + [thioredoxin]-disulfide + H2O = L-methionyl-(S)-S-oxide-[protein] + [thioredoxin]-dithiol. The catalysed reaction is [thioredoxin]-disulfide + L-methionine + H2O = L-methionine (S)-S-oxide + [thioredoxin]-dithiol. In terms of biological role, has an important function as a repair enzyme for proteins that have been inactivated by oxidation. Catalyzes the reversible oxidation-reduction of methionine sulfoxide in proteins to methionine. The sequence is that of Peptide methionine sulfoxide reductase MsrA from Vibrio cholerae serotype O1 (strain ATCC 39541 / Classical Ogawa 395 / O395).